Reading from the N-terminus, the 329-residue chain is 4-hydroxythreonine-4-phosphate dehydrogenase (329 aa).

2 residues coordinate substrate: H136 and T137. 3 residues coordinate a divalent metal cation: H166, H211, and H266. The substrate site is built by K274, N283, and R292.

Belongs to the PdxA family. Homodimer. Zn(2+) is required as a cofactor. Requires Mg(2+) as cofactor. Co(2+) serves as cofactor.

The protein resides in the cytoplasm. The catalysed reaction is 4-(phosphooxy)-L-threonine + NAD(+) = 3-amino-2-oxopropyl phosphate + CO2 + NADH. The protein operates within cofactor biosynthesis; pyridoxine 5'-phosphate biosynthesis; pyridoxine 5'-phosphate from D-erythrose 4-phosphate: step 4/5. Functionally, catalyzes the NAD(P)-dependent oxidation of 4-(phosphooxy)-L-threonine (HTP) into 2-amino-3-oxo-4-(phosphooxy)butyric acid which spontaneously decarboxylates to form 3-amino-2-oxopropyl phosphate (AHAP). In Escherichia coli (strain 55989 / EAEC), this protein is 4-hydroxythreonine-4-phosphate dehydrogenase.